The chain runs to 157 residues: Small ribosomal subunit protein uS7 (157 aa).

The protein belongs to the universal ribosomal protein uS7 family. Part of the 30S ribosomal subunit. Contacts proteins S9 and S11.

In terms of biological role, one of the primary rRNA binding proteins, it binds directly to 16S rRNA where it nucleates assembly of the head domain of the 30S subunit. Is located at the subunit interface close to the decoding center, probably blocks exit of the E-site tRNA. This chain is Small ribosomal subunit protein uS7, found in Marinomonas sp. (strain MWYL1).